We begin with the raw amino-acid sequence, 175 residues long: CDP-archaeol synthase (175 aa).

The next 4 helical transmembrane spans lie at 41 to 61 (GLFS…WLSS), 82 to 102 (LIVV…KSFF), 122 to 142 (FVVG…VSNF), and 150 to 170 (VIII…LIGV).

It belongs to the CDP-archaeol synthase family. The cofactor is Mg(2+).

It is found in the cell membrane. The enzyme catalyses 2,3-bis-O-(geranylgeranyl)-sn-glycerol 1-phosphate + CTP + H(+) = CDP-2,3-bis-O-(geranylgeranyl)-sn-glycerol + diphosphate. The protein operates within membrane lipid metabolism; glycerophospholipid metabolism. Functionally, catalyzes the formation of CDP-2,3-bis-(O-geranylgeranyl)-sn-glycerol (CDP-archaeol) from 2,3-bis-(O-geranylgeranyl)-sn-glycerol 1-phosphate (DGGGP) and CTP. This reaction is the third ether-bond-formation step in the biosynthesis of archaeal membrane lipids. The protein is CDP-archaeol synthase of Methanosarcina barkeri (strain Fusaro / DSM 804).